The chain runs to 155 residues: 3-hydroxyacyl-[acyl-carrier-protein] dehydratase FabZ (155 aa).

H54 is a catalytic residue.

This sequence belongs to the thioester dehydratase family. FabZ subfamily.

It is found in the cytoplasm. The catalysed reaction is a (3R)-hydroxyacyl-[ACP] = a (2E)-enoyl-[ACP] + H2O. Functionally, involved in unsaturated fatty acids biosynthesis. Catalyzes the dehydration of short chain beta-hydroxyacyl-ACPs and long chain saturated and unsaturated beta-hydroxyacyl-ACPs. This is 3-hydroxyacyl-[acyl-carrier-protein] dehydratase FabZ from Burkholderia mallei (strain NCTC 10247).